A 129-amino-acid chain; its full sequence is MRHYEIVFMVHPDQSEQVAGMIERYTGSITEAGGKIHRLEDWGRRQLAYPINKLHKAHYVLMNVEAGQEVIDELETAFRFNDAVLRNMIMRTKAAITEQSIMLKQKEERAERAPRREERAEAKPEAAAE.

Residues 103–129 form a disordered region; that stretch reads LKQKEERAERAPRREERAEAKPEAAAE. Positions 104-129 are enriched in basic and acidic residues; the sequence is KQKEERAERAPRREERAEAKPEAAAE.

This sequence belongs to the bacterial ribosomal protein bS6 family.

In terms of biological role, binds together with bS18 to 16S ribosomal RNA. This Vibrio campbellii (strain ATCC BAA-1116) protein is Small ribosomal subunit protein bS6.